The primary structure comprises 808 residues: MAYDHKSIEAKWQKYWDEHETFRAPDKSEKEKYYVMDMFPYPSGQGLHVGHPEGYTATDIMSRYKRAKGFNVLHPMGWDAFGLPAEQYAIKTGNNPAGFTNKNVQVFKNQIKSLGFSIDWSREINTTDPEYYKWSQWIFEKLYEKGLAYEDEIMVNWAPDFPGGGIVVANEEVIDGKTERGGYPVYRKPMKQWVLRITAYADRLLEDLEDLDWPEAIKEQQRHWIGKSIGASVFFNIADSDKQIEVYTTRPDTLFGAQYMVLSPEHELVDEITTLEQKEAIANYKKEVETKSDLERTDLNKDKTGAFTGAYATNPINGEKLPIWIADYVLSSYGTGAIMAVPAHDDRDWEFAKKFNLPIKAVIEGGNVEEAAYTDDGTHINSGFLDGLNKQEAIDKAISWLEEHNAGHQQINYRLRDWIFSRQRYWGEPIPVIHWEDGTQTLVPESELPLRLPEMTQEQLKPSGTGESPLANATDWLNVTRKDGVKGRRETNTMPQWAGSSWYFLRYVDPHNSEALADPEKLKYWMNVDLYVGGAEHAVLHLLYARFWHKFLYDLGVVPTKEPFQKLVNQGMILGENHEKMSKSKGNVVNPDEIVNNYGADTLRVYEMFMGPLTQSKPWSEDGVSGSRRWLDRVWRLLVDEEDKLRDHVTTVNKGDLDKIYHQTVKKVSEDLENMRFNTAISQLMVFVNEAYKSEALPVQYMDGFVQMLAPIAPHLAEELWSKLGHEEDISYVSWPTYDESQLVEDSVEIIFQVNGKVRGKATVARNIDKDAMLDYAKADENVQNFISGKEIRKIIAIPGKFVNIVVG.

A 'HIGH' region motif is present at residues 40-51 (PYPSGQGLHVGH). The 'KMSKS' region signature appears at 580–584 (KMSKS). Lys-583 contributes to the ATP binding site.

Belongs to the class-I aminoacyl-tRNA synthetase family.

Its subcellular location is the cytoplasm. The catalysed reaction is tRNA(Leu) + L-leucine + ATP = L-leucyl-tRNA(Leu) + AMP + diphosphate. The polypeptide is Leucine--tRNA ligase (Leuconostoc mesenteroides subsp. mesenteroides (strain ATCC 8293 / DSM 20343 / BCRC 11652 / CCM 1803 / JCM 6124 / NCDO 523 / NBRC 100496 / NCIMB 8023 / NCTC 12954 / NRRL B-1118 / 37Y)).